The chain runs to 374 residues: Putative 2,3-diketo-5-methylthiopentyl-1-phosphate enolase (374 aa).

Substrate-binding positions include Lys138, 164-167, His255, Gly327, and 349-350; these read QDDE and GG. Asp166 is a Mg(2+) binding site.

It belongs to the RuBisCO large chain family. Type IV subfamily. In terms of assembly, homodimer. It depends on Mg(2+) as a cofactor.

The catalysed reaction is 5-methylsulfanyl-2,3-dioxopentyl phosphate = 2-hydroxy-5-methylsulfanyl-3-oxopent-1-enyl phosphate. The protein operates within amino-acid biosynthesis; L-methionine biosynthesis via salvage pathway; L-methionine from S-methyl-5-thio-alpha-D-ribose 1-phosphate: step 3/6. Catalyzes the enolization of 2,3-diketo-5-methylthiopentyl-1-phosphate (DK-MTP-1-P) into 2-hydroxy-3-keto-5-methylthiopentenyl-1-phosphate (HK-MTPenyl-1-P). The sequence is that of Putative 2,3-diketo-5-methylthiopentyl-1-phosphate enolase (mtnW) from Shouchella clausii (strain KSM-K16) (Alkalihalobacillus clausii).